We begin with the raw amino-acid sequence, 227 residues long: Octanoyltransferase (227 aa).

The region spanning 43–218 (ADSQDELWIV…TFTKTLGYQE (176 aa)) is the BPL/LPL catalytic domain. Substrate contacts are provided by residues 82–89 (RGGQVTYH), 149–151 (SLG), and 162–164 (GLA). C180 serves as the catalytic Acyl-thioester intermediate.

The protein belongs to the LipB family.

The protein localises to the cytoplasm. The enzyme catalyses octanoyl-[ACP] + L-lysyl-[protein] = N(6)-octanoyl-L-lysyl-[protein] + holo-[ACP] + H(+). Its pathway is protein modification; protein lipoylation via endogenous pathway; protein N(6)-(lipoyl)lysine from octanoyl-[acyl-carrier-protein]: step 1/2. Functionally, catalyzes the transfer of endogenously produced octanoic acid from octanoyl-acyl-carrier-protein onto the lipoyl domains of lipoate-dependent enzymes. Lipoyl-ACP can also act as a substrate although octanoyl-ACP is likely to be the physiological substrate. The polypeptide is Octanoyltransferase (Shewanella denitrificans (strain OS217 / ATCC BAA-1090 / DSM 15013)).